A 471-amino-acid polypeptide reads, in one-letter code: Tyrosine--tRNA ligase (471 aa).

Tyr-41 is an L-tyrosine binding site. The short motif at 46-55 (PTAPSLHVGN) is the 'HIGH' region element. Residues Tyr-176 and Gln-180 each coordinate L-tyrosine. The short motif at 236–240 (KFGKT) is the 'KMSKS' region element. Residue Lys-239 participates in ATP binding. An S4 RNA-binding domain is found at 403–471 (DLITHILQKV…GKKHLAAVFY (69 aa)).

It belongs to the class-I aminoacyl-tRNA synthetase family. TyrS type 1 subfamily. Homodimer.

Its subcellular location is the cytoplasm. It catalyses the reaction tRNA(Tyr) + L-tyrosine + ATP = L-tyrosyl-tRNA(Tyr) + AMP + diphosphate + H(+). Its function is as follows. Catalyzes the attachment of tyrosine to tRNA(Tyr) in a two-step reaction: tyrosine is first activated by ATP to form Tyr-AMP and then transferred to the acceptor end of tRNA(Tyr). The sequence is that of Tyrosine--tRNA ligase from Tropheryma whipplei (strain Twist) (Whipple's bacillus).